Consider the following 436-residue polypeptide: D-amino acid dehydrogenase (436 aa).

3 to 17 serves as a coordination point for FAD; it reads IVVLGAGVVGVTSAY.

Belongs to the DadA oxidoreductase family. Requires FAD as cofactor.

The enzyme catalyses a D-alpha-amino acid + A + H2O = a 2-oxocarboxylate + AH2 + NH4(+). The protein operates within amino-acid degradation; D-alanine degradation; NH(3) and pyruvate from D-alanine: step 1/1. In terms of biological role, oxidative deamination of D-amino acids. The polypeptide is D-amino acid dehydrogenase (Cereibacter sphaeroides (strain ATCC 17029 / ATH 2.4.9) (Rhodobacter sphaeroides)).